Consider the following 158-residue polypeptide: MGRFIFVSFGLLVVFLSLSGTGADFNCPPGWSAYDQYCYQVIKEPKNWDDAERFCTEQADGGHLVSIESKGERDFVAQLVSQNIESVEDHVWTGLRVQNKEKQCSTEWSDGSSVSYENLLELYMRKCGALERETGFHKWINLGCIQLNPFVCKFPPQC.

A signal peptide spans 1–23 (MGRFIFVSFGLLVVFLSLSGTGA). Cystine bridges form between cysteine 27–cysteine 38, cysteine 55–cysteine 152, and cysteine 127–cysteine 144. Residues 34-153 (YDQYCYQVIK…CIQLNPFVCK (120 aa)) enclose the C-type lectin domain.

The protein belongs to the snaclec family. Heterotetramer of the subunits alpha-1, alpha-2, beta-1 and beta-2; disulfide-linked. As to expression, expressed by the venom gland.

It is found in the secreted. Its function is as follows. Agglucetin specifically causes platelet aggregation and surface exposure of integrin alpha-IIb/beta-3 with a GPIb-(GP1BA-) dependent manner in washed platelets. It binds to human platelets in a saturable manner, and its binding is specifically blocked by anti-GP Ib mAb. It regulates endothelial cell survival and promotes angiogenesis by activating integrin alpha-v/beta-3 signaling through FAK/phosphatidylinositol 3-kinase (PI3K)/Akt pathway. In Deinagkistrodon acutus (Hundred-pace snake), this protein is Snaclec agglucetin subunit alpha-2.